Here is a 183-residue protein sequence, read N- to C-terminus: Bifunctional protein PyrR (183 aa).

A PRPP-binding motif is present at residues 102–114 (VVLVDDVLYTGRT).

Belongs to the purine/pyrimidine phosphoribosyltransferase family. PyrR subfamily. In terms of assembly, homodimer and homohexamer; in equilibrium.

It catalyses the reaction UMP + diphosphate = 5-phospho-alpha-D-ribose 1-diphosphate + uracil. Functionally, regulates transcriptional attenuation of the pyrimidine nucleotide (pyr) operon by binding in a uridine-dependent manner to specific sites on pyr mRNA. This disrupts an antiterminator hairpin in the RNA and favors formation of a downstream transcription terminator, leading to a reduced expression of downstream genes. Its function is as follows. Also displays a weak uracil phosphoribosyltransferase activity which is not physiologically significant. The chain is Bifunctional protein PyrR from Listeria welshimeri serovar 6b (strain ATCC 35897 / DSM 20650 / CCUG 15529 / CIP 8149 / NCTC 11857 / SLCC 5334 / V8).